Consider the following 155-residue polypeptide: Transcriptional repressor NrdR (155 aa).

The segment at 3–34 (CPFCNQTDTKVIDSRLVADGVQVRRRRECQAC) is a zinc-finger region. The region spanning 49–139 (PKVIKQDGTR…VYRSFQDISE (91 aa)) is the ATP-cone domain.

The protein belongs to the NrdR family. The cofactor is Zn(2+).

Its function is as follows. Negatively regulates transcription of bacterial ribonucleotide reductase nrd genes and operons by binding to NrdR-boxes. The sequence is that of Transcriptional repressor NrdR from Teredinibacter turnerae (strain ATCC 39867 / T7901).